A 607-amino-acid chain; its full sequence is CUB and zona pellucida-like domain-containing protein 1 (607 aa).

Residues 1–24 (MELVRRLMPLTLLILSCLAELTMA) form the signal peptide. A disulfide bridge connects residues Cys17 and Cys58. CUB domains lie at 25–146 (EAEG…YFFS) and 154–265 (CGGY…YTSI). The Lumenal segment spans residues 25-568 (EAEGNASCTV…EETPNQPFNS (544 aa)). Asn29, Asn57, and Asn67 each carry an N-linked (GlcNAc...) asparagine glycan. 3 cysteine pairs are disulfide-bonded: Cys85/Cys107, Cys154/Cys180, and Cys207/Cys229. The ZP domain maps to 276-519 (TCSSDRMRVI…SRCNQGCVSR (244 aa)). Asn394 and Asn419 each carry an N-linked (GlcNAc...) asparagine glycan. An intrachain disulfide couples Cys442 to Cys498. The chain crosses the membrane as a helical span at residues 569-589 (VHLFSFMVLALNVVTVATITV). Over 590–607 (RHFVNQRADYKYQKLQNY) the chain is Cytoplasmic.

Detected in pancreas and epithelium of ovary. Expressed at higher levels in ovarian tumors than in normal tissue.

It is found in the zymogen granule membrane. Localized to zymogen granules, where it functions in trypsinogen activation. May indirectly regulate cell motility, cell-cell and cell/extracellular matrix interactions. This is CUB and zona pellucida-like domain-containing protein 1 from Homo sapiens (Human).